A 384-amino-acid chain; its full sequence is Soluble hydrogenase, small subunit (384 aa).

An N6-(pyridoxal phosphate)lysine modification is found at Lys194.

Belongs to the class-V pyridoxal-phosphate-dependent aminotransferase family. Heterodimer of a large and a small subunit. Requires pyridoxal 5'-phosphate as cofactor.

The protein resides in the cytoplasm. Functionally, soluble hydrogenase catalyzes both production and consumption of hydrogen from suitable artificial electron donors or acceptors. This subunit catalyzes the tritium-exchange activity. In Synechococcus sp. (strain PCC 6716), this protein is Soluble hydrogenase, small subunit.